Reading from the N-terminus, the 101-residue chain is MTSTTPEIEALAADIGEQIAIDVAKWNLFLAEAHLHIPLAERVYPLLEKDELGRAGVEAALKDLSVAIGGGKVNISLLDALSSTMVNRLLTLLEEYQSKNF.

The protein localises to the cellular thylakoid membrane. This chain is Thylakoid-associated protein slr0729, found in Synechocystis sp. (strain ATCC 27184 / PCC 6803 / Kazusa).